Here is a 232-residue protein sequence, read N- to C-terminus: Sensory rhodopsin III (232 aa).

7 helical membrane passes run 5-25, 39-59, 73-93, 100-120, 125-145, 168-188, and 194-214; these read IVWYGAGAGAFFVSAVVFVWF, LPPIHTSVAGAAYVAMALIAG, FADWIVSTPIITYYLARLAGV, LAVAANVVMIGVGYGFVSMSG, IAFAVSTVAFIGLLYLYIKTF, VVTWSLYPVVYFLGPLGTGII, and NFLVAVLDTIAKVGFMSILLV. Lysine 205 carries the post-translational modification N6-(retinylidene)lysine.

It belongs to the archaeal/bacterial/fungal opsin family. In terms of assembly, interacts with HtrM. The covalent binding of retinal to the apoprotein, bacterioopsin, generates bacteriorhodopsin.

Its subcellular location is the membrane. Sensory rhodopsin. Associates with an unusual transducer lacking a methyl-accepting transducer domain found in all other photosensory transducers. The chromophore is all-trans-retinal in the dark. The sequence is that of Sensory rhodopsin III (xop2) from Haloarcula marismortui (strain ATCC 43049 / DSM 3752 / JCM 8966 / VKM B-1809) (Halobacterium marismortui).